A 701-amino-acid chain; its full sequence is Polyribonucleotide nucleotidyltransferase (701 aa).

Mg(2+) contacts are provided by D487 and D493. The KH domain occupies P554–V613. In terms of domain architecture, S1 motif spans G623–K691.

The protein belongs to the polyribonucleotide nucleotidyltransferase family. As to quaternary structure, component of the RNA degradosome, which is a multiprotein complex involved in RNA processing and mRNA degradation. Mg(2+) is required as a cofactor.

It localises to the cytoplasm. The catalysed reaction is RNA(n+1) + phosphate = RNA(n) + a ribonucleoside 5'-diphosphate. Its function is as follows. Involved in mRNA degradation. Catalyzes the phosphorolysis of single-stranded polyribonucleotides processively in the 3'- to 5'-direction. The sequence is that of Polyribonucleotide nucleotidyltransferase from Pseudomonas fluorescens (strain SBW25).